The primary structure comprises 253 residues: Triosephosphate isomerase (253 aa).

9 to 11 (NWK) contacts substrate. Histidine 97 acts as the Electrophile in catalysis. The active-site Proton acceptor is the glutamate 169. Substrate contacts are provided by residues glycine 175, serine 215, and 236-237 (GG).

The protein belongs to the triosephosphate isomerase family. Homodimer.

Its subcellular location is the cytoplasm. It catalyses the reaction D-glyceraldehyde 3-phosphate = dihydroxyacetone phosphate. The protein operates within carbohydrate biosynthesis; gluconeogenesis. Its pathway is carbohydrate degradation; glycolysis; D-glyceraldehyde 3-phosphate from glycerone phosphate: step 1/1. Involved in the gluconeogenesis. Catalyzes stereospecifically the conversion of dihydroxyacetone phosphate (DHAP) to D-glyceraldehyde-3-phosphate (G3P). This is Triosephosphate isomerase from Staphylococcus aureus (strain Mu50 / ATCC 700699).